We begin with the raw amino-acid sequence, 154 residues long: MEINWSWQRFNDISGEAMHEMLALRQEVFVVEQGCLYLDADGLDKQSWHLFGRTNDQQLVAYARLNFPNTRYPEPSFGRVLTSKAIRGMGAGRKIVAACIQKSLREYPNLDLQISAQAHLTEFYAEFGFTKVGDPYDDHGIEHISMIFRVPPNG.

The region spanning 8–151 is the N-acetyltransferase domain; it reads QRFNDISGEA…EHISMIFRVP (144 aa).

Belongs to the UPF0039 (ElaA) family.

This Synechocystis sp. (strain ATCC 27184 / PCC 6803 / Kazusa) protein is UPF0039 protein sll0451.